Reading from the N-terminus, the 562-residue chain is NAD-dependent malic enzyme (562 aa).

The active-site Proton donor is Tyr101. Arg154 contributes to the NAD(+) binding site. The active-site Proton acceptor is Lys172. A divalent metal cation-binding residues include Glu243, Asp244, and Asp267. Residues Asp267 and Asn415 each coordinate NAD(+).

Belongs to the malic enzymes family. Homotetramer. It depends on Mg(2+) as a cofactor. Mn(2+) serves as cofactor.

It carries out the reaction (S)-malate + NAD(+) = pyruvate + CO2 + NADH. It catalyses the reaction oxaloacetate + H(+) = pyruvate + CO2. This is NAD-dependent malic enzyme from Shewanella piezotolerans (strain WP3 / JCM 13877).